Reading from the N-terminus, the 99-residue chain is Large ribosomal subunit protein uL23 (99 aa).

The protein belongs to the universal ribosomal protein uL23 family. In terms of assembly, part of the 50S ribosomal subunit. Contacts protein L29, and trigger factor when it is bound to the ribosome.

In terms of biological role, one of the early assembly proteins it binds 23S rRNA. One of the proteins that surrounds the polypeptide exit tunnel on the outside of the ribosome. Forms the main docking site for trigger factor binding to the ribosome. The protein is Large ribosomal subunit protein uL23 of Clavibacter michiganensis subsp. michiganensis (strain NCPPB 382).